Here is a 62-residue protein sequence, read N- to C-terminus: Large ribosomal subunit protein uL29 (62 aa).

Belongs to the universal ribosomal protein uL29 family.

This Acholeplasma laidlawii (strain PG-8A) protein is Large ribosomal subunit protein uL29.